A 179-amino-acid chain; its full sequence is MAELATIARPYAEALFRVAEGGDIAAWSTLVQELAQVARLPEVLSVASSPKVTRAQVAELLLAALKSPLAAGAEAKNFVQMLVDNHRIALLPEIAEQFEALKNEREGAADAEIVSAFPLDGADLDSLVASLERKFKRKLKPTVEVDSSLIGGVRVTVGDEVLDTSVRARLASMQAALTA.

Belongs to the ATPase delta chain family. As to quaternary structure, F-type ATPases have 2 components, F(1) - the catalytic core - and F(0) - the membrane proton channel. F(1) has five subunits: alpha(3), beta(3), gamma(1), delta(1), epsilon(1). F(0) has three main subunits: a(1), b(2) and c(10-14). The alpha and beta chains form an alternating ring which encloses part of the gamma chain. F(1) is attached to F(0) by a central stalk formed by the gamma and epsilon chains, while a peripheral stalk is formed by the delta and b chains.

It localises to the cell inner membrane. In terms of biological role, f(1)F(0) ATP synthase produces ATP from ADP in the presence of a proton or sodium gradient. F-type ATPases consist of two structural domains, F(1) containing the extramembraneous catalytic core and F(0) containing the membrane proton channel, linked together by a central stalk and a peripheral stalk. During catalysis, ATP synthesis in the catalytic domain of F(1) is coupled via a rotary mechanism of the central stalk subunits to proton translocation. This protein is part of the stalk that links CF(0) to CF(1). It either transmits conformational changes from CF(0) to CF(1) or is implicated in proton conduction. The sequence is that of ATP synthase subunit delta from Burkholderia multivorans (strain ATCC 17616 / 249).